Here is a 368-residue protein sequence, read N- to C-terminus: Spermidine/putrescine import ATP-binding protein PotA (368 aa).

The region spanning 6–236 (VSIKNVSKFF…PVNVFAATFI (231 aa)) is the ABC transporter domain. ATP is bound at residue 38–45 (GPSGCGKT).

The protein belongs to the ABC transporter superfamily. Spermidine/putrescine importer (TC 3.A.1.11.1) family. In terms of assembly, the complex is composed of two ATP-binding proteins (PotA), two transmembrane proteins (PotB and PotC) and a solute-binding protein (PotD).

It is found in the cell inner membrane. The enzyme catalyses ATP + H2O + polyamine-[polyamine-binding protein]Side 1 = ADP + phosphate + polyamineSide 2 + [polyamine-binding protein]Side 1.. Its function is as follows. Part of the ABC transporter complex PotABCD involved in spermidine/putrescine import. Responsible for energy coupling to the transport system. The protein is Spermidine/putrescine import ATP-binding protein PotA of Thermotoga maritima (strain ATCC 43589 / DSM 3109 / JCM 10099 / NBRC 100826 / MSB8).